The primary structure comprises 454 residues: Ig mu chain C region (454 aa).

Residues 1–105 (SPSSPTVFPL…NKDLRVPIPV (105 aa)) are CH1. Residues C27 and C88 are joined by a disulfide bond. N45, N112, N192, N210, N238, N257, and N280 each carry an N-linked (GlcNAc...) asparagine glycan. Positions 106–218 (VTEMNPNVSV…KNVSSTCAAS (113 aa)) are CH2. C135 and C198 form a disulfide bridge. Residues 219 to 324 (PSTDIQAFPI…QKKFISKPRE (106 aa)) are CH3. 2 disulfide bridges follow: C245-C304 and C352-C414. Residues 325-454 (MNKTPPAVYQ…IMSDAGGTCY (130 aa)) form a CH4 region. N441 is a glycosylation site (N-linked (GlcNAc...) asparagine).

The protein is Ig mu chain C region of Mesocricetus auratus (Golden hamster).